Here is a 363-residue protein sequence, read N- to C-terminus: Peptide chain release factor 1 (363 aa).

Gln237 carries the post-translational modification N5-methylglutamine.

It belongs to the prokaryotic/mitochondrial release factor family. Methylated by PrmC. Methylation increases the termination efficiency of RF1.

It is found in the cytoplasm. Peptide chain release factor 1 directs the termination of translation in response to the peptide chain termination codons UAG and UAA. This chain is Peptide chain release factor 1 (prfA), found in Mycoplasma capricolum subsp. capricolum (strain California kid / ATCC 27343 / NCTC 10154).